Consider the following 150-residue polypeptide: Deoxyuridine 5'-triphosphate nucleotidohydrolase (150 aa).

Residues arginine 69–glycine 71, asparagine 82, threonine 86–aspartate 88, and lysine 96 each bind substrate.

The protein belongs to the dUTPase family. The cofactor is Mg(2+).

The enzyme catalyses dUTP + H2O = dUMP + diphosphate + H(+). It participates in pyrimidine metabolism; dUMP biosynthesis; dUMP from dCTP (dUTP route): step 2/2. In terms of biological role, this enzyme is involved in nucleotide metabolism: it produces dUMP, the immediate precursor of thymidine nucleotides and it decreases the intracellular concentration of dUTP so that uracil cannot be incorporated into DNA. This Aquifex aeolicus (strain VF5) protein is Deoxyuridine 5'-triphosphate nucleotidohydrolase.